We begin with the raw amino-acid sequence, 364 residues long: Nicotinate-nucleotide--dimethylbenzimidazole phosphoribosyltransferase (364 aa).

Glu-332 (proton acceptor) is an active-site residue.

It belongs to the CobT family.

The catalysed reaction is 5,6-dimethylbenzimidazole + nicotinate beta-D-ribonucleotide = alpha-ribazole 5'-phosphate + nicotinate + H(+). It functions in the pathway nucleoside biosynthesis; alpha-ribazole biosynthesis; alpha-ribazole from 5,6-dimethylbenzimidazole: step 1/2. Catalyzes the synthesis of alpha-ribazole-5'-phosphate from nicotinate mononucleotide (NAMN) and 5,6-dimethylbenzimidazole (DMB). This chain is Nicotinate-nucleotide--dimethylbenzimidazole phosphoribosyltransferase, found in Salinispora tropica (strain ATCC BAA-916 / DSM 44818 / JCM 13857 / NBRC 105044 / CNB-440).